A 203-amino-acid chain; its full sequence is uncharacterized protein (203 aa).

2 disordered regions span residues 65–84 and 92–170; these read LSLSEDEDEDESELEDSFDS and SSSS…ETAL. Acidic residues-rich tracts occupy residues 68 to 82 and 98 to 110; these read SEDEDEDESELEDSF and SEEESEEEEEESL. Positions 111–122 are enriched in low complexity; it reads DSSFLVSASLSL. Residues 123–168 show a composition bias toward acidic residues; the sequence is SEDDEEEDSESEDEDEDEDSDSDSDSDSDSDEDEDEDEDSEEEEET. Residues 182–202 traverse the membrane as a helical segment; the sequence is TSFLLPFTLVVLAILFYPAWV.

It is found in the membrane. This is an uncharacterized protein from Saccharomyces cerevisiae (strain ATCC 204508 / S288c) (Baker's yeast).